We begin with the raw amino-acid sequence, 430 residues long: 3-phosphoshikimate 1-carboxyvinyltransferase (430 aa).

3 residues coordinate 3-phosphoshikimate: Lys21, Ser22, and Arg26. Lys21 lines the phosphoenolpyruvate pocket. The phosphoenolpyruvate site is built by Gly95 and Arg123. 3-phosphoshikimate is bound by residues Thr167, Gln169, Asp315, and Lys342. A phosphoenolpyruvate-binding site is contributed by Gln169. Asp315 (proton acceptor) is an active-site residue. Arg346 and Arg390 together coordinate phosphoenolpyruvate.

This sequence belongs to the EPSP synthase family. As to quaternary structure, monomer.

The protein resides in the cytoplasm. The catalysed reaction is 3-phosphoshikimate + phosphoenolpyruvate = 5-O-(1-carboxyvinyl)-3-phosphoshikimate + phosphate. It participates in metabolic intermediate biosynthesis; chorismate biosynthesis; chorismate from D-erythrose 4-phosphate and phosphoenolpyruvate: step 6/7. Catalyzes the transfer of the enolpyruvyl moiety of phosphoenolpyruvate (PEP) to the 5-hydroxyl of shikimate-3-phosphate (S3P) to produce enolpyruvyl shikimate-3-phosphate and inorganic phosphate. The polypeptide is 3-phosphoshikimate 1-carboxyvinyltransferase (Endomicrobium trichonymphae).